The sequence spans 957 residues: Glycine dehydrogenase (decarboxylating) (957 aa).

Lys-708 bears the N6-(pyridoxal phosphate)lysine mark.

It belongs to the GcvP family. As to quaternary structure, the glycine cleavage system is composed of four proteins: P, T, L and H. It depends on pyridoxal 5'-phosphate as a cofactor.

It carries out the reaction N(6)-[(R)-lipoyl]-L-lysyl-[glycine-cleavage complex H protein] + glycine + H(+) = N(6)-[(R)-S(8)-aminomethyldihydrolipoyl]-L-lysyl-[glycine-cleavage complex H protein] + CO2. The glycine cleavage system catalyzes the degradation of glycine. The P protein binds the alpha-amino group of glycine through its pyridoxal phosphate cofactor; CO(2) is released and the remaining methylamine moiety is then transferred to the lipoamide cofactor of the H protein. This is Glycine dehydrogenase (decarboxylating) from Shigella flexneri.